Consider the following 339-residue polypeptide: Uroporphyrinogen decarboxylase (339 aa).

Residues 21 to 25 (RQAGR), Asp71, Tyr147, Ser202, and His315 contribute to the substrate site.

This sequence belongs to the uroporphyrinogen decarboxylase family. Homodimer.

It is found in the cytoplasm. It carries out the reaction uroporphyrinogen III + 4 H(+) = coproporphyrinogen III + 4 CO2. Its pathway is porphyrin-containing compound metabolism; protoporphyrin-IX biosynthesis; coproporphyrinogen-III from 5-aminolevulinate: step 4/4. Functionally, catalyzes the decarboxylation of four acetate groups of uroporphyrinogen-III to yield coproporphyrinogen-III. This chain is Uroporphyrinogen decarboxylase, found in Helicobacter pylori (strain P12).